The primary structure comprises 122 residues: Large ribosomal subunit protein uL14 (122 aa).

This sequence belongs to the universal ribosomal protein uL14 family. As to quaternary structure, part of the 50S ribosomal subunit. Forms a cluster with proteins L3 and L19. In the 70S ribosome, L14 and L19 interact and together make contacts with the 16S rRNA in bridges B5 and B8.

Its function is as follows. Binds to 23S rRNA. Forms part of two intersubunit bridges in the 70S ribosome. This Chlamydia abortus (strain DSM 27085 / S26/3) (Chlamydophila abortus) protein is Large ribosomal subunit protein uL14.